A 408-amino-acid polypeptide reads, in one-letter code: Imidazolonepropionase (408 aa).

The Fe(3+) site is built by His73 and His75. His73 and His75 together coordinate Zn(2+). 4-imidazolone-5-propanoate contacts are provided by Arg82, Tyr145, and His178. Tyr145 provides a ligand contact to N-formimidoyl-L-glutamate. His243 is a binding site for Fe(3+). Residue His243 participates in Zn(2+) binding. Gln246 is a 4-imidazolone-5-propanoate binding site. Asp318 serves as a coordination point for Fe(3+). Asp318 lines the Zn(2+) pocket. Asn320 and Gly322 together coordinate N-formimidoyl-L-glutamate. Residue Ser323 coordinates 4-imidazolone-5-propanoate.

It belongs to the metallo-dependent hydrolases superfamily. HutI family. Zn(2+) is required as a cofactor. It depends on Fe(3+) as a cofactor.

The protein resides in the cytoplasm. It catalyses the reaction 4-imidazolone-5-propanoate + H2O = N-formimidoyl-L-glutamate. It functions in the pathway amino-acid degradation; L-histidine degradation into L-glutamate; N-formimidoyl-L-glutamate from L-histidine: step 3/3. Its function is as follows. Catalyzes the hydrolytic cleavage of the carbon-nitrogen bond in imidazolone-5-propanoate to yield N-formimidoyl-L-glutamate. It is the third step in the universal histidine degradation pathway. In Shewanella sp. (strain ANA-3), this protein is Imidazolonepropionase.